A 284-amino-acid chain; its full sequence is Putative thiosulfate sulfurtransferase SseB (284 aa).

Rhodanese domains are found at residues 20 to 138 and 169 to 280; these read AGDP…SIET and GAGG…RPVG. Arginine 183 serves as a coordination point for substrate. The active-site Cysteine persulfide intermediate is the cysteine 241.

The catalysed reaction is thiosulfate + hydrogen cyanide = thiocyanate + sulfite + 2 H(+). This Mycobacterium tuberculosis (strain CDC 1551 / Oshkosh) protein is Putative thiosulfate sulfurtransferase SseB (sseB).